A 144-amino-acid polypeptide reads, in one-letter code: Large ribosomal subunit protein uL16 (144 aa).

It belongs to the universal ribosomal protein uL16 family. In terms of assembly, part of the 50S ribosomal subunit.

In terms of biological role, binds 23S rRNA and is also seen to make contacts with the A and possibly P site tRNAs. The sequence is that of Large ribosomal subunit protein uL16 from Enterococcus faecalis (strain ATCC 700802 / V583).